The following is a 448-amino-acid chain: uncharacterized protein (448 aa).

The segment covering 187 to 198 (SKGDRGDADDRG) has biased composition (basic and acidic residues). Disordered stretches follow at residues 187 to 221 (SKGD…LPTR), 243 to 270 (LQVP…GATM), and 291 to 361 (LSGL…LPNG). Residues 243 to 261 (LQVPGGTSAAIPSASSTPS) are compositionally biased toward low complexity. A compositionally biased stretch (basic and acidic residues) spans 307-334 (FDERGQEVRDPADYEHANEPDERRADDR).

To M.tuberculosis Rv0025 and Rv0739.

This is an uncharacterized protein from Mycobacterium tuberculosis (strain CDC 1551 / Oshkosh).